We begin with the raw amino-acid sequence, 101 residues long: Small ribosomal subunit protein uS14 (101 aa).

This sequence belongs to the universal ribosomal protein uS14 family. In terms of assembly, part of the 30S ribosomal subunit. Contacts proteins S3 and S10.

Binds 16S rRNA, required for the assembly of 30S particles and may also be responsible for determining the conformation of the 16S rRNA at the A site. The protein is Small ribosomal subunit protein uS14 of Pseudomonas putida (strain ATCC 47054 / DSM 6125 / CFBP 8728 / NCIMB 11950 / KT2440).